The sequence spans 469 residues: 3-isopropylmalate dehydratase large subunit (469 aa).

The [4Fe-4S] cluster site is built by C347, C410, and C413.

Belongs to the aconitase/IPM isomerase family. LeuC type 1 subfamily. In terms of assembly, heterodimer of LeuC and LeuD. The cofactor is [4Fe-4S] cluster.

The catalysed reaction is (2R,3S)-3-isopropylmalate = (2S)-2-isopropylmalate. The protein operates within amino-acid biosynthesis; L-leucine biosynthesis; L-leucine from 3-methyl-2-oxobutanoate: step 2/4. Catalyzes the isomerization between 2-isopropylmalate and 3-isopropylmalate, via the formation of 2-isopropylmaleate. The sequence is that of 3-isopropylmalate dehydratase large subunit from Cupriavidus pinatubonensis (strain JMP 134 / LMG 1197) (Cupriavidus necator (strain JMP 134)).